The primary structure comprises 494 residues: Cobyrinate a,c-diamide synthase (494 aa).

A GATase cobBQ-type domain is found at 270–475 (KIGVALDEAF…AHLHGVAYRE (206 aa)). Cysteine 352 (nucleophile) is an active-site residue.

Belongs to the CobB/CbiA family. Mg(2+) serves as cofactor.

The enzyme catalyses cob(II)yrinate + 2 L-glutamine + 2 ATP + 2 H2O = cob(II)yrinate a,c diamide + 2 L-glutamate + 2 ADP + 2 phosphate + 2 H(+). It carries out the reaction Ni-sirohydrochlorin + 2 L-glutamine + 2 ATP + 2 H2O = Ni-sirohydrochlorin a,c-diamide + 2 L-glutamate + 2 ADP + 2 phosphate + 2 H(+). Its pathway is cofactor biosynthesis; adenosylcobalamin biosynthesis; cob(II)yrinate a,c-diamide from sirohydrochlorin (anaerobic route): step 10/10. Functionally, catalyzes the ATP-dependent amidation of the two carboxylate groups at positions a and c of cobyrinate, using either L-glutamine or ammonia as the nitrogen source (Potential). Involved in the biosynthesis of the unique nickel-containing tetrapyrrole coenzyme F430, the prosthetic group of methyl-coenzyme M reductase (MCR), which plays a key role in methanogenesis and anaerobic methane oxidation. Catalyzes the ATP-dependent amidation of the two carboxylate groups at positions a and c of Ni-sirohydrochlorin, using L-glutamine or ammonia as the nitrogen source. Also able to use sirohydrochlorin as substrate, but only produces a monoamide species in a much slower reaction. Unable to use other metallosirohydrochlorins such as sirohaem and Co-sirohydrochlorin. The sequence is that of Cobyrinate a,c-diamide synthase from Methanosarcina barkeri (strain Fusaro / DSM 804).